A 188-amino-acid chain; its full sequence is Crossover junction endodeoxyribonuclease RuvC (188 aa).

Catalysis depends on residues Asp7, Glu68, and Asp141. Residues Asp7, Glu68, and Asp141 each coordinate Mg(2+).

It belongs to the RuvC family. In terms of assembly, homodimer which binds Holliday junction (HJ) DNA. The HJ becomes 2-fold symmetrical on binding to RuvC with unstacked arms; it has a different conformation from HJ DNA in complex with RuvA. In the full resolvosome a probable DNA-RuvA(4)-RuvB(12)-RuvC(2) complex forms which resolves the HJ. The cofactor is Mg(2+).

It is found in the cytoplasm. It carries out the reaction Endonucleolytic cleavage at a junction such as a reciprocal single-stranded crossover between two homologous DNA duplexes (Holliday junction).. Its function is as follows. The RuvA-RuvB-RuvC complex processes Holliday junction (HJ) DNA during genetic recombination and DNA repair. Endonuclease that resolves HJ intermediates. Cleaves cruciform DNA by making single-stranded nicks across the HJ at symmetrical positions within the homologous arms, yielding a 5'-phosphate and a 3'-hydroxyl group; requires a central core of homology in the junction. The consensus cleavage sequence is 5'-(A/T)TT(C/G)-3'. Cleavage occurs on the 3'-side of the TT dinucleotide at the point of strand exchange. HJ branch migration catalyzed by RuvA-RuvB allows RuvC to scan DNA until it finds its consensus sequence, where it cleaves and resolves the cruciform DNA. This chain is Crossover junction endodeoxyribonuclease RuvC, found in Mycobacterium avium (strain 104).